The following is a 433-amino-acid chain: 3-phosphoshikimate 1-carboxyvinyltransferase (433 aa).

3-phosphoshikimate contacts are provided by Lys21, Ser22, and Arg26. Lys21 is a phosphoenolpyruvate binding site. Residues Gly96 and Arg124 each coordinate phosphoenolpyruvate. 3-phosphoshikimate contacts are provided by Ser167, Ser168, Gln169, Ser195, Asp310, and Lys337. Gln169 serves as a coordination point for phosphoenolpyruvate. Asp310 serves as the catalytic Proton acceptor. Phosphoenolpyruvate contacts are provided by Arg341, Arg384, and Lys410.

The protein belongs to the EPSP synthase family. Monomer.

It is found in the cytoplasm. It carries out the reaction 3-phosphoshikimate + phosphoenolpyruvate = 5-O-(1-carboxyvinyl)-3-phosphoshikimate + phosphate. Its pathway is metabolic intermediate biosynthesis; chorismate biosynthesis; chorismate from D-erythrose 4-phosphate and phosphoenolpyruvate: step 6/7. Its function is as follows. Catalyzes the transfer of the enolpyruvyl moiety of phosphoenolpyruvate (PEP) to the 5-hydroxyl of shikimate-3-phosphate (S3P) to produce enolpyruvyl shikimate-3-phosphate and inorganic phosphate. The chain is 3-phosphoshikimate 1-carboxyvinyltransferase from Clostridium botulinum (strain Alaska E43 / Type E3).